We begin with the raw amino-acid sequence, 952 residues long: MFKFFSSFGDSNEKEIRALEPLVDKINQLENSFTTLSDEALKAKTIEFRARLKNTFETTTAGIQEDITSTTAELAEAQKIADNSKQSRLKAKLESLNKDLSAKENTALNGILPEAFAAVREASRRTIGLRHYDVQLIGGIVLHHGKIAEMRTGEGKTLVATLPLYLNSLLGKGVHLVTVNDYLARRDAYWMGPVYHALGVSVSSIYPMQTPTEELPSRLFDPDYTSEIPGDPWTHFRPISRQEAYKADITYGTSTEFGFDYLRDNLRPDLAQCVQRDMNYAIVDEIDNLLIDEARTPLIISAPDTEAGKLYDVFARLSPRLVVVKDYEINEKDRNAELTEDGWANVEKLLSREGVMKGNSLYDPQNAPLIRHLRNALSAKEFYKKDHQYVVKEGEIIIIDEFTGRMMLGRRYSEGLHQAIEAKEHVKVQQESKTYATVTIQNLFRMYRKLCGMTGTAATEAEEFSKIYKLEVVIIPTNKPAVREDYGDQIYKDQSAKFKAVVNEIDEMRKLGRPVLVGTVSIENSEMLSNMLKRQGIEHKVLNAKQHEKEAQVVAEAGKPGAVTVATNMAGRGVDILLGGKEPTKDDAKVYNEWQAHHQQVLEAGGLHVIGTERHESRRIDNQLRGRSGRQGDPGSSRFYVALDDDIMRRFGSERIQGIMEWAGMDENTPIENGLVSRTLENAQKRVEGYHFDVRKHLVEYDDVVNKHREVIYAERRKILSGADLKSNILDMIREEIITQTAEHTRGYDSSEWNLDGLVTHLNGIFTLPAEINAEALAKLSQEEITDLLTRTAEELYQKKEDETGAGSMRLLERIIMLHTLDSLWVEHLTIMENLRREIGLQAFAQRDPLIAYKNEGHVRFQELLETIKHDVVHNIYRVGIQIQHQTESATAKAASRPVQQQKPLPAAPAAAIPGVSAKAATQSTTPAAKEIGRNDPCPCGSGKKYKKCCGK.

Residues glutamine 135, 153 to 157, and aspartate 575 each bind ATP; that span reads GEGKT. Low complexity predominate over residues 907-921; that stretch reads AAPAAAIPGVSAKAA. The interval 907–946 is disordered; sequence AAPAAAIPGVSAKAATQSTTPAAKEIGRNDPCPCGSGKKY. Zn(2+) is bound by residues cysteine 938, cysteine 940, cysteine 949, and cysteine 950.

Belongs to the SecA family. As to quaternary structure, monomer and homodimer. Part of the essential Sec protein translocation apparatus which comprises SecA, SecYEG and auxiliary proteins SecDF. Other proteins may also be involved. It depends on Zn(2+) as a cofactor.

Its subcellular location is the cell membrane. The protein localises to the cytoplasm. The enzyme catalyses ATP + H2O + cellular proteinSide 1 = ADP + phosphate + cellular proteinSide 2.. Part of the Sec protein translocase complex. Interacts with the SecYEG preprotein conducting channel. Has a central role in coupling the hydrolysis of ATP to the transfer of proteins into and across the cell membrane, serving as an ATP-driven molecular motor driving the stepwise translocation of polypeptide chains across the membrane. This chain is Protein translocase subunit SecA, found in Dehalococcoides mccartyi (strain CBDB1).